A 278-amino-acid chain; its full sequence is Trehalose/maltose transport system permease protein MalG (278 aa).

Transmembrane regions (helical) follow at residues 12 to 32, 74 to 94, 106 to 126, 141 to 161, 186 to 206, and 242 to 262; these read IIGA…MIVV, IIIA…AAYA, IPIF…GYLF, LYFP…LSYF, IILP…FIAA, and GSVM…ALLF. Residues 70-262 form the ABC transmembrane type-1 domain; that stretch reads LKNSIIIASL…IPLVIMALLF (193 aa).

The protein belongs to the binding-protein-dependent transport system permease family. The complex is composed of two ATP-binding proteins (MalK), two transmembrane proteins (MalG and MalF) and a solute-binding protein (MalE).

The protein resides in the cell membrane. In terms of biological role, part of the ABC transporter complex MalEFGK involved in trehalose/maltose import. Responsible for the translocation of the substrate across the membrane. The polypeptide is Trehalose/maltose transport system permease protein MalG (malG) (Thermococcus litoralis (strain ATCC 51850 / DSM 5473 / JCM 8560 / NS-C)).